Reading from the N-terminus, the 339-residue chain is RxLR effector protein SFI4 (339 aa).

An N-terminal signal peptide occupies residues 1–24 (MRVLRVTFLWALLLLVAFSASVYA). The RxLR-dEER motif lies at 51-74 (RGLRNSGMKLNDAKDFKGAIAKLR). 4 TPR repeats span residues 106–139 (AQILNDYGTVLIRAKQYDEAIEVLEDSVAMVEKI), 190–223 (IEASLRIAEGYKKLGNTKKNLKVLKDAVEAQNGE), 232–265 (AELYMELSTAHVAVGEIDDALRAAEVASAIFRQR), and 274–307 (AFSLNALAGVKMRQKKVDEAIKLLEQAHRIAVQI).

The protein belongs to the RxLR effector family.

The protein localises to the secreted. It is found in the host nucleus. Its subcellular location is the host cytoplasm. Its function is as follows. Effector that suppresses flg22-induced post-translational MAP kinase activation in tomato but not in Arabidopsis. The perception of highly conserved pathogen- or microbe-associated molecular patterns (PAMPs/MAMPs), such as flg22, triggers converging signaling pathways recruiting MAP kinase cascades and inducing transcriptional re-programming, yielding a generic antimicrobial response. In Phytophthora infestans (strain T30-4) (Potato late blight agent), this protein is RxLR effector protein SFI4.